Here is a 314-residue protein sequence, read N- to C-terminus: 4-hydroxy-3-methylbut-2-enyl diphosphate reductase (314 aa).

A [4Fe-4S] cluster-binding site is contributed by Cys-12. (2E)-4-hydroxy-3-methylbut-2-enyl diphosphate-binding residues include His-41 and His-74. Dimethylallyl diphosphate contacts are provided by His-41 and His-74. The isopentenyl diphosphate site is built by His-41 and His-74. A [4Fe-4S] cluster-binding site is contributed by Cys-96. His-124 serves as a coordination point for (2E)-4-hydroxy-3-methylbut-2-enyl diphosphate. Residue His-124 coordinates dimethylallyl diphosphate. His-124 lines the isopentenyl diphosphate pocket. The active-site Proton donor is the Glu-126. Thr-168 is a binding site for (2E)-4-hydroxy-3-methylbut-2-enyl diphosphate. Cys-198 is a binding site for [4Fe-4S] cluster. (2E)-4-hydroxy-3-methylbut-2-enyl diphosphate is bound by residues Ser-226, Ser-227, Asn-228, and Ser-270. Residues Ser-226, Ser-227, Asn-228, and Ser-270 each contribute to the dimethylallyl diphosphate site. Isopentenyl diphosphate-binding residues include Ser-226, Ser-227, Asn-228, and Ser-270.

This sequence belongs to the IspH family. The cofactor is [4Fe-4S] cluster.

The enzyme catalyses isopentenyl diphosphate + 2 oxidized [2Fe-2S]-[ferredoxin] + H2O = (2E)-4-hydroxy-3-methylbut-2-enyl diphosphate + 2 reduced [2Fe-2S]-[ferredoxin] + 2 H(+). It carries out the reaction dimethylallyl diphosphate + 2 oxidized [2Fe-2S]-[ferredoxin] + H2O = (2E)-4-hydroxy-3-methylbut-2-enyl diphosphate + 2 reduced [2Fe-2S]-[ferredoxin] + 2 H(+). Its pathway is isoprenoid biosynthesis; dimethylallyl diphosphate biosynthesis; dimethylallyl diphosphate from (2E)-4-hydroxy-3-methylbutenyl diphosphate: step 1/1. The protein operates within isoprenoid biosynthesis; isopentenyl diphosphate biosynthesis via DXP pathway; isopentenyl diphosphate from 1-deoxy-D-xylulose 5-phosphate: step 6/6. Functionally, catalyzes the conversion of 1-hydroxy-2-methyl-2-(E)-butenyl 4-diphosphate (HMBPP) into a mixture of isopentenyl diphosphate (IPP) and dimethylallyl diphosphate (DMAPP). Acts in the terminal step of the DOXP/MEP pathway for isoprenoid precursor biosynthesis. The sequence is that of 4-hydroxy-3-methylbut-2-enyl diphosphate reductase from Pseudomonas fluorescens (strain Pf0-1).